We begin with the raw amino-acid sequence, 604 residues long: Pescadillo homolog (604 aa).

The tract at residues 275–299 is disordered; it reads NSEPAGLIEDKEGEDNKESSKTDES. Residues 282–299 show a composition bias toward basic and acidic residues; it reads IEDKEGEDNKESSKTDES. The region spanning 337 to 427 is the BRCT domain; the sequence is ECRSLFKNLK…IILPTEGYIV (91 aa). Disordered regions lie at residues 518-557 and 574-604; these read KTFS…DAAD and IEIN…AKGR. 2 stretches are compositionally biased toward basic and acidic residues: residues 531–557 and 577–586; these read VVDK…DAAD and NQERKKDKVN.

It belongs to the pescadillo family.

The protein localises to the nucleus. Its subcellular location is the nucleolus. The protein resides in the nucleoplasm. Required for maturation of ribosomal RNAs and formation of the large ribosomal subunit. This Oryza sativa subsp. japonica (Rice) protein is Pescadillo homolog (PES).